Reading from the N-terminus, the 298-residue chain is Protoheme IX farnesyltransferase (298 aa).

Helical transmembrane passes span 26-46 (IVIL…GGPP), 48-68 (LGLT…ANAI), 110-130 (FLVL…GLLF), 147-167 (IVIG…AVTG), 174-194 (VIMF…LALF), 220-240 (ILLY…TGTV), 243-263 (LYLW…VGLL), and 276-296 (TYGW…LDVT).

The protein belongs to the UbiA prenyltransferase family. Protoheme IX farnesyltransferase subfamily. In terms of assembly, interacts with CtaA.

The protein localises to the cell membrane. The enzyme catalyses heme b + (2E,6E)-farnesyl diphosphate + H2O = Fe(II)-heme o + diphosphate. The protein operates within porphyrin-containing compound metabolism; heme O biosynthesis; heme O from protoheme: step 1/1. Converts heme B (protoheme IX) to heme O by substitution of the vinyl group on carbon 2 of heme B porphyrin ring with a hydroxyethyl farnesyl side group. This is Protoheme IX farnesyltransferase from Symbiobacterium thermophilum (strain DSM 24528 / JCM 14929 / IAM 14863 / T).